The primary structure comprises 302 residues: Succinate--CoA ligase [ADP-forming] subunit alpha (302 aa).

CoA contacts are provided by residues 17 to 20, lysine 43, and 96 to 98; these read TGST and ITE. Substrate is bound at residue tyrosine 159. Histidine 247 acts as the Tele-phosphohistidine intermediate in catalysis.

It belongs to the succinate/malate CoA ligase alpha subunit family. In terms of assembly, heterotetramer of two alpha and two beta subunits.

The enzyme catalyses succinate + ATP + CoA = succinyl-CoA + ADP + phosphate. It catalyses the reaction GTP + succinate + CoA = succinyl-CoA + GDP + phosphate. The protein operates within carbohydrate metabolism; tricarboxylic acid cycle; succinate from succinyl-CoA (ligase route): step 1/1. Its function is as follows. Succinyl-CoA synthetase functions in the citric acid cycle (TCA), coupling the hydrolysis of succinyl-CoA to the synthesis of either ATP or GTP and thus represents the only step of substrate-level phosphorylation in the TCA. The alpha subunit of the enzyme binds the substrates coenzyme A and phosphate, while succinate binding and nucleotide specificity is provided by the beta subunit. The chain is Succinate--CoA ligase [ADP-forming] subunit alpha from Staphylococcus aureus (strain MSSA476).